The sequence spans 814 residues: Protein fam-161 (814 aa).

The segment covering 71-87 (ITQHRSSYKVTKSSSCH) has biased composition (polar residues). Disordered stretches follow at residues 71-130 (ITQH…SWSQ), 150-255 (RHQV…ATSA), 569-610 (SRSK…THAT), and 714-814 (MKSA…SSEA). The span at 99-111 (MPRHLDLKPRSSE) shows a compositional bias: basic and acidic residues. Residues 174–193 (STAPSQVSVTSSVQSVAALS) are compositionally biased toward low complexity. Composition is skewed to polar residues over residues 194 to 207 (GQNP…TPSH) and 216 to 235 (RTHQ…TLQN). Positions 236–249 (PRHRTSSASRHHST) are enriched in basic residues. Composition is skewed to polar residues over residues 570-583 (RSKS…NCQE) and 594-610 (ENLP…THAT). The stretch at 606–689 (STHATQLREE…LAEMKQRVLN (84 aa)) forms a coiled coil. Basic and acidic residues predominate over residues 714-727 (MKSAKGRGIERVQS). A compositionally biased stretch (polar residues) spans 728 to 745 (QEKQQSIGRRSSEVSGSG). The span at 751-765 (KGYEESFESEDKSEK) shows a compositional bias: basic and acidic residues. Low complexity-rich tracts occupy residues 766-779 (SGSS…SGSE) and 795-814 (SKST…SSEA).

It belongs to the FAM161 family. As to expression, expressed in amphid and phasmid ciliated neurons.

It localises to the cell projection. The protein resides in the cilium. Its subcellular location is the cytoplasm. It is found in the cytoskeleton. The protein localises to the cilium axoneme. The protein is Protein fam-161 of Caenorhabditis elegans.